A 274-amino-acid polypeptide reads, in one-letter code: Large ribosomal subunit protein uL2 (274 aa).

The tract at residues 223–256 is disordered; that stretch reads VAMNPVDHPHGGGEGRTSGGRHPVTPWGIPTKGY.

It belongs to the universal ribosomal protein uL2 family. Part of the 50S ribosomal subunit. Forms a bridge to the 30S subunit in the 70S ribosome.

Its function is as follows. One of the primary rRNA binding proteins. Required for association of the 30S and 50S subunits to form the 70S ribosome, for tRNA binding and peptide bond formation. It has been suggested to have peptidyltransferase activity; this is somewhat controversial. Makes several contacts with the 16S rRNA in the 70S ribosome. The protein is Large ribosomal subunit protein uL2 of Trichlorobacter lovleyi (strain ATCC BAA-1151 / DSM 17278 / SZ) (Geobacter lovleyi).